The primary structure comprises 442 residues: Betaine reductase complex component B subunit alpha (442 aa).

As to quaternary structure, heterotetramer of two alpha and two beta subunits. Component of the betaine reductase complex, together with components A and C. PB is substrate specific.

It catalyses the reaction acetyl phosphate + trimethylamine + [thioredoxin]-disulfide + H2O = glycine betaine + [thioredoxin]-dithiol + phosphate + H(+). Its function is as follows. In the first step of betaine reductase, the substrate is bound to component PB via a Schiff base intermediate. Then the PB-activated substrate is nucleophilically attacked by the selenol anion of component PA to transform it to a carboxymethylated selenoether and the respective amine. By action of component PC, acetyl phosphate is formed, leaving component PA in its oxidized state. Finally component PA becomes reduced by the thioredoxin system to start a new catalytic cycle of reductive deamination. The chain is Betaine reductase complex component B subunit alpha (grdI) from Peptoclostridium acidaminophilum (Eubacterium acidaminophilum).